The sequence spans 210 residues: Tissue inhibitor of metalloproteinase (210 aa).

The signal sequence occupies residues 1–27; that stretch reads MDLRKHLGLLTLLLVAVFAFYGRPADA. Cys-28 lines the Zn(2+) pocket. Involved in metalloproteinase-binding regions lie at residues 28 to 31 and 93 to 94; these read CSCM and DA. 5 cysteine pairs are disulfide-bonded: Cys-28–Cys-96, Cys-30–Cys-118, Cys-145–Cys-195, Cys-150–Cys-155, and Cys-165–Cys-180. The region spanning 28 to 145 is the NTR domain; the sequence is CSCMPSHPQT…SGGYAKATNC (118 aa).

It belongs to the protease inhibitor I35 (TIMP) family. Expressed in heads of female and male adult flies. Expressed at the time of eclosion in unopened wings of adult flies. Strongly expressed at the tip of ovarian germarium region 1 where germline stem cells (GSCs) and cystoblasts reside and in region 2 of the germarium.

Its subcellular location is the secreted. Metalloproteinase inhibitor that acts on both matrix metalloproteinases Mmp1 and Mmp2 in vitro. Complexes with metalloproteinases and irreversibly inactivates them by binding to their catalytic zinc cofactor. Required for wing maturation which is the final step in morphogenesis of the adult fly. Involved in the negative regulation of developmental tissue invasion for imaginal disk eversion during metamorphosis by inhibiting Mmp-mediated basement membrane (BM) degradation. Required for oogenesis and for the long-term maintainance of germarial structure and shape in the adult ovaries. Required for maintaining composition and biophysical properties of the extracellular matrix (ECM), and for the normal organization and cyst production of the germline stem cell (GSC) niche. This is Tissue inhibitor of metalloproteinase from Drosophila melanogaster (Fruit fly).